The chain runs to 242 residues: DNA repair protein RecO (242 aa).

It belongs to the RecO family. As to quaternary structure, monomer.

Its function is as follows. Involved in DNA repair and RecF pathway recombination. The sequence is that of DNA repair protein RecO from Salmonella gallinarum (strain 287/91 / NCTC 13346).